A 279-amino-acid polypeptide reads, in one-letter code: Putative pyruvate, phosphate dikinase regulatory protein (279 aa).

ADP is bound at residue 153 to 160; the sequence is GVSRTSKT.

Belongs to the pyruvate, phosphate/water dikinase regulatory protein family. PDRP subfamily.

The catalysed reaction is N(tele)-phospho-L-histidyl/L-threonyl-[pyruvate, phosphate dikinase] + ADP = N(tele)-phospho-L-histidyl/O-phospho-L-threonyl-[pyruvate, phosphate dikinase] + AMP + H(+). It catalyses the reaction N(tele)-phospho-L-histidyl/O-phospho-L-threonyl-[pyruvate, phosphate dikinase] + phosphate + H(+) = N(tele)-phospho-L-histidyl/L-threonyl-[pyruvate, phosphate dikinase] + diphosphate. Functionally, bifunctional serine/threonine kinase and phosphorylase involved in the regulation of the pyruvate, phosphate dikinase (PPDK) by catalyzing its phosphorylation/dephosphorylation. The sequence is that of Putative pyruvate, phosphate dikinase regulatory protein from Rhodopseudomonas palustris (strain HaA2).